The chain runs to 566 residues: Urease subunit alpha (566 aa).

In terms of domain architecture, Urease spans 128-566 (GGIDTHIHFI…LPMAQRYFLF (439 aa)). Ni(2+) is bound by residues H133, H135, and K216. K216 carries the post-translational modification N6-carboxylysine. A substrate-binding site is contributed by H218. H245 and H271 together coordinate Ni(2+). The active-site Proton donor is the H319. A Ni(2+)-binding site is contributed by D359.

It belongs to the metallo-dependent hydrolases superfamily. Urease alpha subunit family. As to quaternary structure, heterotrimer of UreA (gamma), UreB (beta) and UreC (alpha) subunits. Three heterotrimers associate to form the active enzyme. It depends on Ni cation as a cofactor. In terms of processing, carboxylation allows a single lysine to coordinate two nickel ions.

The protein localises to the cytoplasm. It carries out the reaction urea + 2 H2O + H(+) = hydrogencarbonate + 2 NH4(+). It functions in the pathway nitrogen metabolism; urea degradation; CO(2) and NH(3) from urea (urease route): step 1/1. This Pseudomonas fluorescens (strain Pf0-1) protein is Urease subunit alpha.